The sequence spans 773 residues: E3 ubiquitin-protein ligase RFWD3 (773 aa).

4 disordered regions span residues 18–67, 92–117, 139–230, and 259–279; these read VAEQ…SQVG, RVEN…IPVS, LRPP…EEVV, and GETL…SVSK. S47 is subject to Phosphoserine; by ATM and ATR. Over residues 50–59 the composition is skewed to low complexity; sequence APPLLQPAPA. S64 carries the post-translational modification Phosphoserine; by ATM and ATR. Residues 151 to 164 are compositionally biased toward basic residues; the sequence is RSRRRRGSASRRSR. Residues 186-205 show a composition bias toward polar residues; the sequence is VSRTQPHLPSMSQDSETRNP. A compositionally biased stretch (low complexity) spans 207-221; sequence SEDLQVSSSSSSDSE. The segment covering 263 to 273 has biased composition (polar residues); sequence PKQSPQKTNPL. Residues 287–331 form an RING-type; degenerate zinc finger; it reads CTICFEHWTNAGDHRLSALRCGHLFGYKCISKWLKGQARKCPQCN. The stretch at 361–403 forms a coiled coil; the sequence is SLLKEQMLRKQAELESAQCRLQLQVLTDECSKLHSRVQDLQKL. WD repeat units lie at residues 494–536, 538–576, and 582–627; these read MHGK…QTYN, GRPV…SHIQ, and KARC…SHWP.

Interacts with MDM2 and p53/TP53. Binds to the RPA complex via direct interaction with RPA2. Interacts with RAD51. Phosphorylated at Ser-46 and Ser-63 upon DNA damage by ATM or ATR. ATM phosphorylation occurs at early times upon DNA damage, while ATR is the major kinase at later times. Phosphorylation by ATM and ATR is required to stabilize p53/TP53. Part of the phosphorylation depends upon RPA2 presence.

The protein resides in the nucleus. The protein localises to the PML body. It is found in the cytoplasm. It catalyses the reaction S-ubiquitinyl-[E2 ubiquitin-conjugating enzyme]-L-cysteine + [acceptor protein]-L-lysine = [E2 ubiquitin-conjugating enzyme]-L-cysteine + N(6)-ubiquitinyl-[acceptor protein]-L-lysine.. Its pathway is protein modification; protein ubiquitination. Its function is as follows. E3 ubiquitin-protein ligase required for the repair of DNA interstrand cross-links (ICL) in response to DNA damage. Plays a key role in RPA-mediated DNA damage signaling and repair. Acts by mediating ubiquitination of the RPA complex (RPA1, RPA2 and RPA3 subunits) and RAD51 at stalled replication forks, leading to remove them from DNA damage sites and promote homologous recombination. Also mediates the ubiquitination of p53/TP53 in the late response to DNA damage, and acts as a positive regulator of p53/TP53 stability, thereby regulating the G1/S DNA damage checkpoint. May act by catalyzing the formation of short polyubiquitin chains on p53/TP53 that are not targeted to the proteasome. In response to ionizing radiation, interacts with MDM2 and enhances p53/TP53 ubiquitination, possibly by restricting MDM2 from extending polyubiquitin chains on ubiquitinated p53/TP53. Required to translesion DNA synthesis across DNA-protein cross-link adducts by catalyzing ubiquitination of proteins on single-stranded DNA (ssDNA). In Ailuropoda melanoleuca (Giant panda), this protein is E3 ubiquitin-protein ligase RFWD3 (RFWD3).